Consider the following 367-residue polypeptide: Zorya protein ZorE (367 aa).

In terms of biological role, component of antiviral defense system Zorya type II, composed of ZorA, ZorB and ZorE. Expression of Zorya type II in E.coli (strain MG1655) confers resistance to phages SECphi7 and T7. While most T7 infected Zorya-containing cells undergo abortive infection, a minority produce viable phage progeny. These eventually accumulate to a high multiplicity of infection, leading to culture collapse by 170 minutes after initial infection. ZorA and ZorB probably assemble in the cell inner membrane and exert their effect there. This may be a nuclease. In Escherichia coli (strain ATCC 8739 / DSM 1576 / NBRC 3972 / NCIMB 8545 / WDCM 00012 / Crooks), this protein is Zorya protein ZorE.